A 77-amino-acid chain; its full sequence is Acyl carrier protein (77 aa).

The region spanning serine 2–lysine 77 is the Carrier domain. Serine 37 carries the post-translational modification O-(pantetheine 4'-phosphoryl)serine.

This sequence belongs to the acyl carrier protein (ACP) family. 4'-phosphopantetheine is transferred from CoA to a specific serine of apo-ACP by AcpS. This modification is essential for activity because fatty acids are bound in thioester linkage to the sulfhydryl of the prosthetic group.

It is found in the cytoplasm. Its pathway is lipid metabolism; fatty acid biosynthesis. In terms of biological role, carrier of the growing fatty acid chain in fatty acid biosynthesis. This Desulfovibrio desulfuricans (strain ATCC 27774 / DSM 6949 / MB) protein is Acyl carrier protein.